A 241-amino-acid chain; its full sequence is Probable 2-phosphosulfolactate phosphatase (241 aa).

Belongs to the ComB family. Mg(2+) is required as a cofactor.

It catalyses the reaction (2R)-O-phospho-3-sulfolactate + H2O = (2R)-3-sulfolactate + phosphate. This Gloeothece citriformis (strain PCC 7424) (Cyanothece sp. (strain PCC 7424)) protein is Probable 2-phosphosulfolactate phosphatase.